Here is a 249-residue protein sequence, read N- to C-terminus: MYKLVLIRHGESTWNKENRFTGWVDVDLTEQGNREARQAGQLLKEAGYTFDIAYTSVLKRAIRTLWHVQDQMDLMYVPVVHSWRLNERHYGALSGLNKAETAAKYGDEQVLVWRRSYDTPPPALEPGDERAPYADPRYAKVPREQLPLTECLKDTVARVLPLWNESIAPAVKAGKQVLIAAHGNSLRALIKYLDGISDADIVGLNIPNGVPLVYELDESLTPIRHYYLGDQEAIAKAQAAVAQQGKSAA.

Substrate is bound by residues 8–15, 21–22, Arg-60, 87–90, Lys-98, 114–115, and 183–184; these read RHGESTWN, TG, ERHY, RR, and GN. His-9 acts as the Tele-phosphohistidine intermediate in catalysis. Glu-87 acts as the Proton donor/acceptor in catalysis.

This sequence belongs to the phosphoglycerate mutase family. BPG-dependent PGAM subfamily. Homodimer.

The enzyme catalyses (2R)-2-phosphoglycerate = (2R)-3-phosphoglycerate. It functions in the pathway carbohydrate degradation; glycolysis; pyruvate from D-glyceraldehyde 3-phosphate: step 3/5. Functionally, catalyzes the interconversion of 2-phosphoglycerate and 3-phosphoglycerate. This is 2,3-bisphosphoglycerate-dependent phosphoglycerate mutase from Burkholderia mallei (strain NCTC 10247).